We begin with the raw amino-acid sequence, 344 residues long: Ferrochelatase (344 aa).

The Fe cation site is built by His214 and Glu295.

The protein belongs to the ferrochelatase family.

Its subcellular location is the cytoplasm. It carries out the reaction heme b + 2 H(+) = protoporphyrin IX + Fe(2+). It functions in the pathway porphyrin-containing compound metabolism; protoheme biosynthesis; protoheme from protoporphyrin-IX: step 1/1. In terms of biological role, catalyzes the ferrous insertion into protoporphyrin IX. The chain is Ferrochelatase from Rhizobium leguminosarum bv. trifolii (strain WSM2304).